A 91-amino-acid chain; its full sequence is Small ribosomal subunit protein bS20 (91 aa).

The disordered stretch occupies residues 72-91 (KNAASRQKSRLAKKLNGLSA).

This sequence belongs to the bacterial ribosomal protein bS20 family.

Functionally, binds directly to 16S ribosomal RNA. The sequence is that of Small ribosomal subunit protein bS20 from Halalkalibacterium halodurans (strain ATCC BAA-125 / DSM 18197 / FERM 7344 / JCM 9153 / C-125) (Bacillus halodurans).